The sequence spans 312 residues: Urease accessory protein UreD (312 aa).

Residues 1 to 15 (MLAEQFTDKNKHAEQ) show a composition bias toward basic and acidic residues. A disordered region spans residues 1–24 (MLAEQFTDKNKHAEQELSPGSSAV).

Belongs to the UreD family. UreD, UreF and UreG form a complex that acts as a GTP-hydrolysis-dependent molecular chaperone, activating the urease apoprotein by helping to assemble the nickel containing metallocenter of UreC. The UreE protein probably delivers the nickel.

The protein localises to the cytoplasm. In terms of biological role, required for maturation of urease via the functional incorporation of the urease nickel metallocenter. The polypeptide is Urease accessory protein UreD (Hahella chejuensis (strain KCTC 2396)).